The following is a 102-amino-acid chain: Large ribosomal subunit protein uL24 (102 aa).

The protein belongs to the universal ribosomal protein uL24 family. In terms of assembly, part of the 50S ribosomal subunit.

In terms of biological role, one of two assembly initiator proteins, it binds directly to the 5'-end of the 23S rRNA, where it nucleates assembly of the 50S subunit. Its function is as follows. One of the proteins that surrounds the polypeptide exit tunnel on the outside of the subunit. This Finegoldia magna (strain ATCC 29328 / DSM 20472 / WAL 2508) (Peptostreptococcus magnus) protein is Large ribosomal subunit protein uL24.